The following is a 188-amino-acid chain: Ubiquitin-conjugating enzyme E2-21 kDa (188 aa).

The UBC core domain maps to 3-182 (STEKRLLKEY…VHYYIAKYSA (180 aa)). The Glycyl thioester intermediate role is filled by C119.

Belongs to the ubiquitin-conjugating enzyme family.

It catalyses the reaction S-ubiquitinyl-[E1 ubiquitin-activating enzyme]-L-cysteine + [E2 ubiquitin-conjugating enzyme]-L-cysteine = [E1 ubiquitin-activating enzyme]-L-cysteine + S-ubiquitinyl-[E2 ubiquitin-conjugating enzyme]-L-cysteine.. The protein operates within protein modification; protein ubiquitination. In terms of biological role, catalyzes the covalent attachment of ubiquitin to other proteins. Essential for peroxisome biogenesis. Required for UBC4-independent ubiquitination of PEX5. The sequence is that of Ubiquitin-conjugating enzyme E2-21 kDa (PEX4) from Pichia angusta (Yeast).